The sequence spans 499 residues: Hepatic triacylglycerol lipase (499 aa).

A signal peptide spans methionine 1–alanine 22. N-linked (GlcNAc...) asparagine glycans are attached at residues asparagine 42 and asparagine 78. Serine 168 (nucleophile) is an active-site residue. Aspartate 194 (charge relay system) is an active-site residue. Positions cysteine 254–cysteine 277 are essential for determining substrate specificity. The active-site Charge relay system is histidine 279. Residues tyrosine 352–lysine 486 form the PLAT domain. Residues asparagine 362 and asparagine 397 are each glycosylated (N-linked (GlcNAc...) asparagine).

Belongs to the AB hydrolase superfamily. Lipase family. As to quaternary structure, homodimer.

Its subcellular location is the secreted. The enzyme catalyses a triacylglycerol + H2O = a diacylglycerol + a fatty acid + H(+). It carries out the reaction a 1-acyl-sn-glycero-3-phosphocholine + H2O = sn-glycerol 3-phosphocholine + a fatty acid + H(+). The catalysed reaction is a 1,2-diacyl-sn-glycero-3-phosphocholine + H2O = a 2-acyl-sn-glycero-3-phosphocholine + a fatty acid + H(+). It catalyses the reaction 1,2,3-tri-(9Z-octadecenoyl)-glycerol + H2O = di-(9Z)-octadecenoylglycerol + (9Z)-octadecenoate + H(+). The enzyme catalyses 1,2-di-(9Z-octadecenoyl)-sn-glycero-3-phosphocholine + H2O = (9Z-octadecenoyl)-sn-glycero-3-phosphocholine + (9Z)-octadecenoate + H(+). It carries out the reaction 1,2,3-tributanoylglycerol + H2O = dibutanoylglycerol + butanoate + H(+). The catalysed reaction is 1,2-dihexadecanoyl-sn-glycero-3-phosphocholine + H2O = hexadecanoyl-sn-glycero-3-phosphocholine + hexadecanoate + H(+). It catalyses the reaction 1,2-di-(9Z-octadecenoyl)-sn-glycerol + H2O = 2-(9Z-octadecenoyl)-glycerol + (9Z)-octadecenoate + H(+). The enzyme catalyses 1,2,3-tri-(9Z-octadecenoyl)-glycerol + H2O = 2,3-di-(9Z)-octadecenoyl-sn-glycerol + (9Z)-octadecenoate + H(+). It carries out the reaction 1-(9Z-octadecenoyl)-sn-glycero-3-phospho-L-serine + H2O = sn-glycero-3-phospho-L-serine + (9Z)-octadecenoate + H(+). The catalysed reaction is 1-hexadecanoyl-sn-glycero-3-phosphocholine + H2O = sn-glycerol 3-phosphocholine + hexadecanoate + H(+). It catalyses the reaction 1,3-di-(9Z-octadecenoyl)-glycerol + H2O = 3-(9Z-octadecenoyl)-sn-glycerol + (9Z)-octadecenoate + H(+). Its activity is regulated as follows. Phospholipase A1 and triacylglycerol lipase are inhibited by sphingomyelin. In terms of biological role, catalyzes the hydrolysis of triglycerides and phospholipids present in circulating plasma lipoproteins, including chylomicrons, intermediate density lipoproteins (IDL), low density lipoproteins (LDL) of large size and high density lipoproteins (HDL), releasing free fatty acids (FFA) and smaller lipoprotein particles. Also exhibits lysophospholipase activity. Can hydrolyze both neutral lipid and phospholipid substrates but shows a greater binding affinity for neutral lipid substrates than phospholipid substrates. In native LDL, preferentially hydrolyzes the phosphatidylcholine species containing polyunsaturated fatty acids at sn-2 position. This chain is Hepatic triacylglycerol lipase (LIPC), found in Homo sapiens (Human).